Here is a 424-residue protein sequence, read N- to C-terminus: Histidine--tRNA ligase (424 aa).

Belongs to the class-II aminoacyl-tRNA synthetase family. Homodimer.

The protein localises to the cytoplasm. The catalysed reaction is tRNA(His) + L-histidine + ATP = L-histidyl-tRNA(His) + AMP + diphosphate + H(+). The sequence is that of Histidine--tRNA ligase from Escherichia coli O127:H6 (strain E2348/69 / EPEC).